The following is a 611-amino-acid chain: Serine/arginine repetitive matrix protein 4 (611 aa).

Disordered stretches follow at residues 38-248 (ARKP…PLQM) and 263-611 (SAAD…STRR). Composition is skewed to basic residues over residues 107 to 123 (RGKK…RRRS) and 131 to 189 (VKKK…HRCP). Over residues 190–202 (SRSQSSESRPSSC) the composition is skewed to low complexity. Over residues 203 to 216 (ESRHRGRSPEEGQK) the composition is skewed to basic and acidic residues. Residues 217-226 (SRRRHSRRCS) show a composition bias toward basic residues. A compositionally biased stretch (polar residues) spans 270-290 (KTASPLTTSRGRSQEYDSGND). Low complexity predominate over residues 291–301 (TSSPPSTQTSS). A compositionally biased stretch (polar residues) spans 322-341 (LNSGNTSDSGNSFTTSSPQN). 2 stretches are compositionally biased toward low complexity: residues 390 to 422 (SRSS…SRST) and 430 to 461 (SRSP…SRYS). Residues 462–482 (PSRERDPKYSEKDSQQRERER) show a composition bias toward basic and acidic residues. Over residues 483–498 (ARRRRRSYSPMRKRRR) the composition is skewed to basic residues. The span at 499–508 (DSPSHLEARR) shows a compositional bias: basic and acidic residues. Residues 522-549 (PSPSSSGSLSSTSSWYSSSSSRSASRSY) are compositionally biased toward low complexity. Basic residues predominate over residues 550–564 (SRSRSRSRSRRRSRT). Positions 565–580 (RTSSSSSSRSPSPGSR) are enriched in low complexity. Positions 581-595 (SRSRSRSRSRSRSRS) are enriched in basic residues. Residues 596-611 (QSRSYSSADSYSSTRR) show a composition bias toward low complexity.

This sequence belongs to the nSR100 family. In terms of processing, phosphorylated. Specifically expressed in neuronal cells (at protein level). Expressed in the cerebellum.

The protein localises to the nucleus. Its function is as follows. Splicing factor specifically required for neural cell differentiation. Acts in conjunction with nPTB/PTBP2 by binding directly to its regulated target transcripts and promotes neural-specific exon inclusion in many genes that function in neural cell differentiation. Required to promote the inclusion of neural-specific exon 10 in nPTB/PTBP2, leading to increased expression of neural-specific nPTB/PTBP2. Also promotes the inclusion of exon 16 in DAAM1 in neuron extracts. Promotes alternative splicing of REST transcripts to produce REST isoform 3 (REST4) with greatly reduced repressive activity, thereby activating expression of REST targets in neural cells. Plays an important role during embryonic development as well as in the proper functioning of the adult nervous system. Regulates alternative splicing events in genes with important neuronal functions. The sequence is that of Serine/arginine repetitive matrix protein 4 (SRRM4) from Homo sapiens (Human).